A 1433-amino-acid chain; its full sequence is DNA-directed RNA polymerase subunit beta' (1433 aa).

Positions 66, 68, 81, and 84 each coordinate Zn(2+). Mg(2+)-binding residues include Asp-473, Asp-475, and Asp-477. Positions 815, 889, 896, and 899 each coordinate Zn(2+).

The protein belongs to the RNA polymerase beta' chain family. The RNAP catalytic core consists of 2 alpha, 1 beta, 1 beta' and 1 omega subunit. When a sigma factor is associated with the core the holoenzyme is formed, which can initiate transcription. It depends on Mg(2+) as a cofactor. Zn(2+) is required as a cofactor.

It catalyses the reaction RNA(n) + a ribonucleoside 5'-triphosphate = RNA(n+1) + diphosphate. Functionally, DNA-dependent RNA polymerase catalyzes the transcription of DNA into RNA using the four ribonucleoside triphosphates as substrates. This is DNA-directed RNA polymerase subunit beta' from Porphyromonas gingivalis (strain ATCC 33277 / DSM 20709 / CIP 103683 / JCM 12257 / NCTC 11834 / 2561).